The sequence spans 209 residues: Thymidylate kinase (209 aa).

10 to 17 (GPDGAGKT) is a binding site for ATP.

This sequence belongs to the thymidylate kinase family.

It catalyses the reaction dTMP + ATP = dTDP + ADP. Its function is as follows. Phosphorylation of dTMP to form dTDP in both de novo and salvage pathways of dTTP synthesis. This chain is Thymidylate kinase, found in Pediococcus pentosaceus (strain ATCC 25745 / CCUG 21536 / LMG 10740 / 183-1w).